Consider the following 138-residue polypeptide: Small ribosomal subunit protein uS11c (138 aa).

It belongs to the universal ribosomal protein uS11 family. Part of the 30S ribosomal subunit.

Its subcellular location is the plastid. It localises to the chloroplast. This Acorus calamus (Sweet flag) protein is Small ribosomal subunit protein uS11c.